The chain runs to 473 residues: Ribulose bisphosphate carboxylase large chain (473 aa).

Residues Asn-116 and Thr-166 each coordinate substrate. Catalysis depends on Lys-168, which acts as the Proton acceptor. Lys-170 contacts substrate. Mg(2+) is bound by residues Lys-194, Asp-196, and Glu-197. Lys-194 is subject to N6-carboxylysine. His-287 serves as the catalytic Proton acceptor. Positions 288, 320, and 372 each coordinate substrate.

The protein belongs to the RuBisCO large chain family. Type I subfamily. Heterohexadecamer of 8 large chains and 8 small chains. In R.sphaeroides the complex is approximately 500 kDa. Mg(2+) serves as cofactor.

The catalysed reaction is 2 (2R)-3-phosphoglycerate + 2 H(+) = D-ribulose 1,5-bisphosphate + CO2 + H2O. The enzyme catalyses D-ribulose 1,5-bisphosphate + O2 = 2-phosphoglycolate + (2R)-3-phosphoglycerate + 2 H(+). Functionally, ruBisCO catalyzes two reactions: the carboxylation of D-ribulose 1,5-bisphosphate, the primary event in carbon dioxide fixation, as well as the oxidative fragmentation of the pentose substrate. Both reactions occur simultaneously and in competition at the same active site. The protein is Ribulose bisphosphate carboxylase large chain of Thiobacillus denitrificans (strain ATCC 25259 / T1).